A 235-amino-acid chain; its full sequence is NAD(P)H-hydrate epimerase (235 aa).

The YjeF N-terminal domain maps to 18–221 (AAQIDEQLFT…SLVDEHELLM (204 aa)). (6S)-NADPHX is bound at residue 65–69 (NNGGD). Residues Asn-66 and Asp-127 each coordinate K(+). Residues 131–137 (GFSFHPP) and Asp-160 each bind (6S)-NADPHX. Ser-163 provides a ligand contact to K(+).

Belongs to the NnrE/AIBP family. Requires K(+) as cofactor.

The catalysed reaction is (6R)-NADHX = (6S)-NADHX. It catalyses the reaction (6R)-NADPHX = (6S)-NADPHX. In terms of biological role, catalyzes the epimerization of the S- and R-forms of NAD(P)HX, a damaged form of NAD(P)H that is a result of enzymatic or heat-dependent hydration. This is a prerequisite for the S-specific NAD(P)H-hydrate dehydratase to allow the repair of both epimers of NAD(P)HX. The chain is NAD(P)H-hydrate epimerase from Caenorhabditis elegans.